A 211-amino-acid chain; its full sequence is Putative hydrolase SMU_367 (211 aa).

The N-terminal stretch at 1–29 (MKKQFLEKAVFTVAATAATVVLGNKMADA) is a signal peptide. Positions 30–74 (DTYTLQEGDSFFSVAQRYHMDAYELASMNGKDITSLILPGQTLTV) constitute a LysM domain. Residues 77 to 101 (SAAPDNQAAAPTDTTQATTETNDAN) are disordered. Residues 78-101 (AAPDNQAAAPTDTTQATTETNDAN) show a composition bias toward low complexity. Residues 85–209 (AAPTDTTQAT…GTPGSVSYIY (125 aa)) enclose the Peptidase C51 domain.

This is Putative hydrolase SMU_367 from Streptococcus mutans serotype c (strain ATCC 700610 / UA159).